Reading from the N-terminus, the 198-residue chain is QQRFFPQRYIELVIVADRRMYTKYNSDSNKIRTRVHELVNTVNGFFRSMNVDASLANLEVWSKKDLIKVEKDSSKTLTSFGEWRERDLLRRKSHDNAQLLTAIDFNGNTIGRAYLGSMCNPKRSVGIVQDHSPINLLVGVTMAHELGHNLGMEHDGKDCLCGASLCIMSPGLTDGPSYEFSDCSKDYYQTFLTNHNPQ.

Residues 8–198 (RYIELVIVAD…QTFLTNHNPQ (191 aa)) form the Peptidase M12B domain. Residues Glu11 and Asp95 each coordinate Ca(2+). His144 lines the Zn(2+) pocket. Glu145 is an active-site residue. Zn(2+) contacts are provided by His148 and His154. Cystine bridges form between Cys159–Cys183 and Cys161–Cys166.

The protein belongs to the venom metalloproteinase (M12B) family. P-I subfamily. Zn(2+) serves as cofactor. As to expression, expressed by the venom gland.

The protein resides in the secreted. With respect to regulation, inhibited by EDTA, EGTA and 1,10-phenanthroline, partially inhibited by beta-mercaptoethanol and not inhibited by serine protease inhibitors (leupeptin and aprotinin). Also inhibited by an excess of zinc, mercury and magnesium ions. Extracts of the plant Casearia mariquitensis neutralizes the decrease of platelets and plasma fibrinogen induced by the protease. The same extracts also partially inhibit Bbeta chain cleavage, but not Aalpha chain cleavage. This metalloprotease hydrolyzes the Aalpha chain of fibrin and fibrinogen first followed by the Bbeta chain and shows no effect on the gamma chain. It is also able to degrade type I collagen, fibronectin, laminin and induces inflammatory reaction. It is devoid of hemorrhagic and thrombotic activities, except in lung where it induces pulmonary bleeding. It also induces a mild myotoxic reaction. It is not able to inhibit platelet aggregation, but it induces decrease of platelets and plasma fibrinogen. It contributes to local tissue damage by inducing edema, inflammatory infiltrate and mild myotoxicity, and by degrading extracellular matrix components. The protein is Snake venom metalloproteinase neuwiedase of Bothrops pauloensis (Neuwied's lancehead).